Consider the following 473-residue polypeptide: Glutamate--tRNA ligase (473 aa).

The short motif at 11–21 (PSPTGFLHIGG) is the 'HIGH' region element. The short motif at 240–244 (KLSKR) is the 'KMSKS' region element. Lysine 243 contacts ATP.

Belongs to the class-I aminoacyl-tRNA synthetase family. Glutamate--tRNA ligase type 1 subfamily. In terms of assembly, monomer.

The protein resides in the cytoplasm. It carries out the reaction tRNA(Glu) + L-glutamate + ATP = L-glutamyl-tRNA(Glu) + AMP + diphosphate. In terms of biological role, catalyzes the attachment of glutamate to tRNA(Glu) in a two-step reaction: glutamate is first activated by ATP to form Glu-AMP and then transferred to the acceptor end of tRNA(Glu). This is Glutamate--tRNA ligase from Rhodopseudomonas palustris (strain ATCC BAA-98 / CGA009).